A 435-amino-acid chain; its full sequence is Serine--tRNA ligase (435 aa).

237-239 (TAE) provides a ligand contact to L-serine. 268 to 270 (RSE) is a binding site for ATP. Residue E291 participates in L-serine binding. An ATP-binding site is contributed by 355–358 (EISS). L-serine is bound at residue S390.

The protein belongs to the class-II aminoacyl-tRNA synthetase family. Type-1 seryl-tRNA synthetase subfamily. In terms of assembly, homodimer. The tRNA molecule binds across the dimer.

Its subcellular location is the cytoplasm. The catalysed reaction is tRNA(Ser) + L-serine + ATP = L-seryl-tRNA(Ser) + AMP + diphosphate + H(+). It catalyses the reaction tRNA(Sec) + L-serine + ATP = L-seryl-tRNA(Sec) + AMP + diphosphate + H(+). It participates in aminoacyl-tRNA biosynthesis; selenocysteinyl-tRNA(Sec) biosynthesis; L-seryl-tRNA(Sec) from L-serine and tRNA(Sec): step 1/1. Its function is as follows. Catalyzes the attachment of serine to tRNA(Ser). Is also able to aminoacylate tRNA(Sec) with serine, to form the misacylated tRNA L-seryl-tRNA(Sec), which will be further converted into selenocysteinyl-tRNA(Sec). This chain is Serine--tRNA ligase, found in Lactobacillus delbrueckii subsp. bulgaricus (strain ATCC BAA-365 / Lb-18).